The chain runs to 486 residues: Wax ester synthase/diacylglycerol acyltransferase 11 (486 aa).

At 1-192 the chain is on the cytoplasmic side; the sequence is MGEDKKTARE…CNSGFFNKIW (192 aa). His-144 (proton acceptor) is an active-site residue. A helical membrane pass occupies residues 193 to 213; sequence WLFVGLWFILRLLFNTFVDIL. Topologically, residues 214–486 are extracellular; the sequence is MFALTIFVLR…LERGLYEIEV (273 aa).

This sequence in the N-terminal section; belongs to the long-chain O-acyltransferase family. Mostly expressed in inflorescences and flowers, especially at the periphery of petal epidermal cells.

The protein resides in the cell membrane. It localises to the endoplasmic reticulum membrane. It carries out the reaction an acyl-CoA + a 1,2-diacyl-sn-glycerol = a triacyl-sn-glycerol + CoA. It catalyses the reaction a long chain fatty alcohol + a fatty acyl-CoA = a wax ester + CoA. It functions in the pathway glycerolipid metabolism; triacylglycerol biosynthesis. Its pathway is lipid metabolism. Functionally, bifunctional wax ester synthase/diacylglycerol acyltransferase. Involved in cuticular wax biosynthesis. Required for petals development, probably by mediating the production of fatty acids at the plasma membrane in the petal epidermis acting as lubricants that makes petal elongation smooth in narrow space between the sepals and the anthers inside floral buds. The polypeptide is Wax ester synthase/diacylglycerol acyltransferase 11 (Arabidopsis thaliana (Mouse-ear cress)).